The sequence spans 814 residues: Acyl-coenzyme A dehydrogenase (814 aa).

The active-site Proton acceptor is the E497.

It belongs to the acyl-CoA dehydrogenase family. FAD is required as a cofactor.

It catalyses the reaction a medium-chain 2,3-saturated fatty acyl-CoA + oxidized [electron-transfer flavoprotein] + H(+) = a medium-chain (2E)-enoyl-CoA + reduced [electron-transfer flavoprotein]. The catalysed reaction is a long-chain 2,3-saturated fatty acyl-CoA + oxidized [electron-transfer flavoprotein] + H(+) = a long-chain (2E)-enoyl-CoA + reduced [electron-transfer flavoprotein]. Its pathway is lipid metabolism; fatty acid beta-oxidation. Catalyzes the dehydrogenation of acyl-coenzymes A (acyl-CoAs) to 2-enoyl-CoAs, the first step of the beta-oxidation cycle of fatty acid degradation. Is required for the utilization of medium- and long-chain fatty acids as sole carbon sources for growth. The protein is Acyl-coenzyme A dehydrogenase (fadE) of Escherichia coli O157:H7.